Consider the following 87-residue polypeptide: uncharacterized protein (87 aa).

Residues 1-26 (MMSTQHFILSLTILIIISNLHDEVNA) form the signal peptide. 3 disulfides stabilise this stretch: Cys61–Cys75, Cys68–Cys79, and Cys74–Cys84.

The protein resides in the secreted. This is an uncharacterized protein from Schistosoma japonicum (Blood fluke).